The chain runs to 1018 residues: Probable inorganic carbon transporter subunit DabA 2 (1018 aa).

Residues Cys489, Asp491, His674, and Cys689 each coordinate Zn(2+).

The protein belongs to the inorganic carbon transporter (TC 9.A.2) DabA family. As to quaternary structure, forms a complex with DabB. Zn(2+) serves as cofactor.

It is found in the cell inner membrane. Functionally, part of an energy-coupled inorganic carbon pump. The protein is Probable inorganic carbon transporter subunit DabA 2 of Sorangium cellulosum (strain So ce56) (Polyangium cellulosum (strain So ce56)).